A 205-amino-acid polypeptide reads, in one-letter code: Latherin (205 aa).

The cysteines at positions 133 and 176 are disulfide-linked.

It belongs to the BPI/LBP/Plunc superfamily. Plunc family. In terms of assembly, monomer.

It localises to the secreted. Major protein in sweat, has surfactant properties. The chain is Latherin (LATH) from Equus quagga burchellii (Burchell's zebra).